The primary structure comprises 1479 residues: Type VII secretion system protein EssC (1479 aa).

Over 1–229 (MHKLIIKYNK…RPPQPIQKNN (229 aa)) the chain is Cytoplasmic. A helical membrane pass occupies residues 230–252 (TVIWRSIIPPLVMIALTVVIFLV). The Extracellular portion of the chain corresponds to 253–256 (RPIG). The helical transmembrane segment at 257–279 (IYILMMIGMSSVTIVFGITTYFS) threads the bilayer. At 280 to 1479 (EKKKYNKDVE…QAYQKIRWFK (1200 aa)) the chain is on the cytoplasmic side. FtsK domains follow at residues 652–846 (DDIL…QDSN) and 997–1183 (QGPM…SEVS). Residues 672–679 (GTTGSGKS) and 1014–1021 (GSPGYGRT) each bind ATP.

This sequence belongs to the EssC family. In terms of assembly, homooligomer. Interacts with EsaE.

Its subcellular location is the cell membrane. Component of the type VII secretion system (Ess). Required for the secretion of substrates including EsxA and EsxB. However, unable to support secretion of the substrate protein EsxC. This is Type VII secretion system protein EssC from Staphylococcus aureus (strain MSSA476).